The chain runs to 213 residues: HTH-type transcriptional regulator SrpR (213 aa).

The region spanning Glu-10–Leu-70 is the HTH tetR-type domain. Positions Thr-33–Phe-52 form a DNA-binding region, H-T-H motif.

Its function is as follows. In conjunction with SrpS represses the srpABC operon. This is HTH-type transcriptional regulator SrpR (srpR) from Pseudomonas putida (Arthrobacter siderocapsulatus).